Reading from the N-terminus, the 312-residue chain is Acetyl-coenzyme A carboxylase carboxyl transferase subunit alpha (312 aa).

The CoA carboxyltransferase C-terminal domain maps to 36 to 286 (NLEKEISKTY…ADYVKKSLNE (251 aa)).

The protein belongs to the AccA family. Acetyl-CoA carboxylase is a heterohexamer composed of biotin carboxyl carrier protein (AccB), biotin carboxylase (AccC) and two subunits each of ACCase subunit alpha (AccA) and ACCase subunit beta (AccD).

The protein localises to the cytoplasm. It carries out the reaction N(6)-carboxybiotinyl-L-lysyl-[protein] + acetyl-CoA = N(6)-biotinyl-L-lysyl-[protein] + malonyl-CoA. The protein operates within lipid metabolism; malonyl-CoA biosynthesis; malonyl-CoA from acetyl-CoA: step 1/1. Component of the acetyl coenzyme A carboxylase (ACC) complex. First, biotin carboxylase catalyzes the carboxylation of biotin on its carrier protein (BCCP) and then the CO(2) group is transferred by the carboxyltransferase to acetyl-CoA to form malonyl-CoA. The sequence is that of Acetyl-coenzyme A carboxylase carboxyl transferase subunit alpha from Campylobacter jejuni subsp. jejuni serotype O:23/36 (strain 81-176).